Here is a 542-residue protein sequence, read N- to C-terminus: Chaperonin GroEL 2 (542 aa).

ATP is bound by residues 30-33, lysine 51, 87-91, glycine 415, and aspartate 496; these read TLGP and DGTTT.

Belongs to the chaperonin (HSP60) family. As to quaternary structure, forms a cylinder of 14 subunits composed of two heptameric rings stacked back-to-back. Interacts with the co-chaperonin GroES.

It is found in the cytoplasm. It carries out the reaction ATP + H2O + a folded polypeptide = ADP + phosphate + an unfolded polypeptide.. Functionally, together with its co-chaperonin GroES, plays an essential role in assisting protein folding. The GroEL-GroES system forms a nano-cage that allows encapsulation of the non-native substrate proteins and provides a physical environment optimized to promote and accelerate protein folding. In Cereibacter sphaeroides (strain ATCC 17023 / DSM 158 / JCM 6121 / CCUG 31486 / LMG 2827 / NBRC 12203 / NCIMB 8253 / ATH 2.4.1.) (Rhodobacter sphaeroides), this protein is Chaperonin GroEL 2.